The following is a 333-amino-acid chain: Taste receptor type 2 member 38 (333 aa).

Topologically, residues 1–17 are extracellular; the sequence is MLTLTRICTVSYEVRST. A helical transmembrane segment spans residues 18-38; that stretch reads FLFISVLEFAVGFLTNAFIFL. The Cytoplasmic portion of the chain corresponds to 39–55; it reads VNFWDVVKRQPLSNSDC. A helical transmembrane segment spans residues 56 to 76; it reads VLLCLSISRLFLHGLLFLSAI. Over 77 to 94 the chain is Extracellular; that stretch reads QLTHFQKLSEPLNHSYHA. A helical membrane pass occupies residues 95 to 115; it reads IIMLWMIANQANLWLATCLSL. Residues 116–142 lie on the Cytoplasmic side of the membrane; that stretch reads LYCSKLIRSSHTFLICLASWVSRKICQ. A helical transmembrane segment spans residues 143–163; it reads MLLGIILCSCICTVLCVWCYF. Over 164–190 the chain is Extracellular; the sequence is SRPHFTVTTVLFTNNNTRLNWQIKDLN. The N-linked (GlcNAc...) asparagine glycan is linked to asparagine 178. A helical transmembrane segment spans residues 191-211; that stretch reads LFYSFLFCYLWSVPPFLLFLV. Over 212-251 the chain is Cytoplasmic; it reads SSGMLTVSLGRHMRTMKVYTRDFRDPSLEAHIKALKSLVS. A helical membrane pass occupies residues 252-272; that stretch reads FFCFFVISSCAAFISVPLLIL. The Extracellular segment spans residues 273–276; it reads WRDK. Residues 277 to 297 form a helical membrane-spanning segment; that stretch reads IGVMVCVGIMAACPSGHAAIL. Residues 298-333 lie on the Cytoplasmic side of the membrane; sequence ISGNAKLRRAVTTILLWAQSSLKVRADHKADSRTLC.

Belongs to the G-protein coupled receptor T2R family.

The protein localises to the membrane. Functionally, receptor that may play a role in the perception of bitterness and is gustducin-linked. May play a role in sensing the chemical composition of the gastrointestinal content. The activity of this receptor may stimulate alpha gustducin, mediate PLC-beta-2 activation and lead to the gating of TRPM5. This chain is Taste receptor type 2 member 38 (TAS2R38), found in Hylobates klossii (Kloss's gibbon).